The following is a 416-amino-acid chain: Phosphatidylinositol 5-phosphate 4-kinase type-2 beta (416 aa).

Ser2 carries the N-acetylserine modification. A Phosphothreonine modification is found at Thr8. Residue Ser19 is modified to Phosphoserine. The PIPK domain occupies 38 to 415 (ASEPILSVLM…RFNEFMSNIL (378 aa)). The required for interaction with PIP5K1A stretch occupies residues 64–70 (VMLMPDD). Residues Lys94 and Lys150 each carry the N6-acetyllysine modification. ATP-binding positions include 202–204 (RNV) and Lys214. GTP is bound by residues 203–204 (NV) and Lys214. Phosphothreonine is present on Thr322. At Ser326 the chain carries Phosphoserine. Asp369 provides a ligand contact to GTP.

Homodimer. Binds TNFRSF1A. Interacts with PIP4K2A; the interaction suppresses ubiquitination by the SPOP/CUL3 complex. In terms of processing, ubiquitinated by the SPOP/CUL3 complex. Ubiquitination is stimulated by PtdIns5P levels. Phosphorylated on serine residues. As to expression, highly expressed in brain, heart, pancreas, skeletal muscle and kidney. Detected at lower levels in placenta, lung and liver.

It is found in the endoplasmic reticulum membrane. The protein localises to the cell membrane. Its subcellular location is the nucleus. The protein resides in the cytoplasm. It carries out the reaction a 1,2-diacyl-sn-glycero-3-phospho-(1D-myo-inositol-5-phosphate) + ATP = a 1,2-diacyl-sn-glycero-3-phospho-(1D-myo-inositol-4,5-bisphosphate) + ADP + H(+). It catalyses the reaction 1,2-dihexadecanoyl-sn-glycero-3-phospho-(1D-myo-inositol-5-phosphate) + ATP = 1,2-dihexadecanoyl-sn-glycero-3-phospho-(1D-myo-inositol-4,5-bisphosphate) + ADP + H(+). The enzyme catalyses 1,2-dihexadecanoyl-sn-glycero-3-phospho-(1D-myo-inositol-5-phosphate) + GTP = 1,2-dihexadecanoyl-sn-glycero-3-phospho-(1D-myo-inositol-4,5-bisphosphate) + GDP + H(+). Its function is as follows. Participates in the biosynthesis of phosphatidylinositol 4,5-bisphosphate. Preferentially utilizes GTP, rather than ATP, for PI(5)P phosphorylation and its activity reflects changes in direct proportion to the physiological GTP concentration. Its GTP-sensing activity is critical for metabolic adaptation. PIP4Ks negatively regulate insulin signaling through a catalytic-independent mechanism. They interact with PIP5Ks and suppress PIP5K-mediated PtdIns(4,5)P2 synthesis and insulin-dependent conversion to PtdIns(3,4,5)P3. In Homo sapiens (Human), this protein is Phosphatidylinositol 5-phosphate 4-kinase type-2 beta.